The chain runs to 301 residues: Probable alpha-L-glutamate ligase (301 aa).

Residues 104-287 (LQLLSRKGIG…VAGMIYEFIE (184 aa)) enclose the ATP-grasp domain. ATP contacts are provided by residues lysine 141, 178 to 179 (EF), aspartate 187, and 211 to 213 (RSN). Mg(2+)-binding residues include aspartate 248, glutamate 260, and asparagine 262. Mn(2+)-binding residues include aspartate 248, glutamate 260, and asparagine 262.

The protein belongs to the RimK family. Requires Mg(2+) as cofactor. Mn(2+) is required as a cofactor.

This is Probable alpha-L-glutamate ligase from Vibrio vulnificus (strain CMCP6).